The following is a 366-amino-acid chain: Protein RecA (366 aa).

Residue 81–88 (GPESSGKT) participates in ATP binding.

The protein belongs to the RecA family.

It localises to the cytoplasm. Functionally, can catalyze the hydrolysis of ATP in the presence of single-stranded DNA, the ATP-dependent uptake of single-stranded DNA by duplex DNA, and the ATP-dependent hybridization of homologous single-stranded DNAs. It interacts with LexA causing its activation and leading to its autocatalytic cleavage. In Leptospira interrogans serogroup Icterohaemorrhagiae serovar copenhageni (strain Fiocruz L1-130), this protein is Protein RecA.